The primary structure comprises 499 residues: Glucose-6-phosphate exchanger SLC37A2 (499 aa).

Residues 21 to 40 traverse the membrane as a helical segment; sequence YRGFIIVMTFLFYTCYHLSR. Asn-53, Asn-62, and Asn-66 each carry an N-linked (GlcNAc...) asparagine glycan. 11 consecutive transmembrane segments (helical) span residues 86 to 106, 116 to 136, 143 to 163, 187 to 207, 208 to 228, 302 to 322, 334 to 354, 362 to 382, 391 to 411, 434 to 454, and 458 to 478; these read GSLD…SGIF, LSGG…GYYW, YYIL…PAVV, AVGN…AWGL, SFIV…FFLV, LCLL…PLYI, GDLS…AGGI, AITC…YNYF, IAML…ITTA, AIID…AGVL, and GWNY…LLLA.

It belongs to the major facilitator superfamily. Organophosphate:Pi antiporter (OPA) (TC 2.A.1.4) family.

The protein localises to the endoplasmic reticulum membrane. The enzyme catalyses D-glucose 6-phosphate(in) + phosphate(out) = D-glucose 6-phosphate(out) + phosphate(in). Its function is as follows. Inorganic phosphate and glucose-6-phosphate antiporter. May transport cytoplasmic glucose-6-phosphate into the lumen of the endoplasmic reticulum and translocate inorganic phosphate into the opposite direction. This chain is Glucose-6-phosphate exchanger SLC37A2, found in Xenopus laevis (African clawed frog).